The chain runs to 80 residues: Peptide LaIT2 (80 aa).

The signal sequence occupies residues 1-21 (MAKHLIVMFLVIMVISSLVDC). Residues 49–80 (QYGCPIISNMCEDHCRRKKMEGQCDLLDCVCS) form the BetaSPN-type CS-alpha/beta domain. 3 disulfide bridges follow: Cys52/Cys72, Cys59/Cys77, and Cys63/Cys79.

This sequence belongs to the long chain scorpion toxin family. Class 2 subfamily. Expressed by the venom gland.

Its subcellular location is the secreted. Dual-function toxin that acts both as an insecticidal and an antimicrobial peptide. May inhibit voltage-gated potassium channels (Kv). This amphipathic peptide causes significant antimicrobial activity against E.coli (MIC=7 uM) but does not show any activity against S.aureus even at high concentration. In vivo, causes paralysis or death to crickets. The sequence is that of Peptide LaIT2 from Liocheles australasiae (Dwarf wood scorpion).